Reading from the N-terminus, the 506-residue chain is Protein nucleotidyltransferase YdiU (506 aa).

Positions 95, 97, 98, 118, 130, 131, 181, and 188 each coordinate ATP. Residue Asp-257 is the Proton acceptor of the active site. The Mg(2+) site is built by Asn-258 and Asp-267. Asp-267 is an ATP binding site. Positions 487-506 (KHYQDAPTPDQRVKQTFCGT) are disordered.

This sequence belongs to the SELO family. Requires Mg(2+) as cofactor. Mn(2+) serves as cofactor.

It catalyses the reaction L-seryl-[protein] + ATP = 3-O-(5'-adenylyl)-L-seryl-[protein] + diphosphate. The catalysed reaction is L-threonyl-[protein] + ATP = 3-O-(5'-adenylyl)-L-threonyl-[protein] + diphosphate. The enzyme catalyses L-tyrosyl-[protein] + ATP = O-(5'-adenylyl)-L-tyrosyl-[protein] + diphosphate. It carries out the reaction L-histidyl-[protein] + UTP = N(tele)-(5'-uridylyl)-L-histidyl-[protein] + diphosphate. It catalyses the reaction L-seryl-[protein] + UTP = O-(5'-uridylyl)-L-seryl-[protein] + diphosphate. The catalysed reaction is L-tyrosyl-[protein] + UTP = O-(5'-uridylyl)-L-tyrosyl-[protein] + diphosphate. In terms of biological role, nucleotidyltransferase involved in the post-translational modification of proteins. It can catalyze the addition of adenosine monophosphate (AMP) or uridine monophosphate (UMP) to a protein, resulting in modifications known as AMPylation and UMPylation. This is Protein nucleotidyltransferase YdiU from Shewanella denitrificans (strain OS217 / ATCC BAA-1090 / DSM 15013).